Here is an 86-residue protein sequence, read N- to C-terminus: Small ribosomal subunit protein bS16 (86 aa).

Belongs to the bacterial ribosomal protein bS16 family.

The protein is Small ribosomal subunit protein bS16 of Stenotrophomonas maltophilia (strain R551-3).